Here is a 623-residue protein sequence, read N- to C-terminus: Endoglucanase 12 (623 aa).

Residues 1–73 lie on the Cytoplasmic side of the membrane; it reads MYSANHWGGS…LGCVVVKRKL (73 aa). The helical; Signal-anchor for type II membrane protein transmembrane segment at 74–94 threads the bilayer; it reads LWWVLWTLLAAFILIGLPVII. Over 95–623 the chain is Extracellular; that stretch reads AKSIPKKKPH…TPPPPSKWKP (529 aa). The active-site Nucleophile is the aspartate 166. N-linked (GlcNAc...) asparagine glycosylation is found at asparagine 217, asparagine 236, asparagine 324, asparagine 345, asparagine 408, and asparagine 425. Catalysis depends on residues histidine 513, aspartate 561, and glutamate 570.

Belongs to the glycosyl hydrolase 9 (cellulase E) family. As to expression, ubiquitous.

The protein localises to the membrane. The catalysed reaction is Endohydrolysis of (1-&gt;4)-beta-D-glucosidic linkages in cellulose, lichenin and cereal beta-D-glucans.. This chain is Endoglucanase 12 (GLU3), found in Oryza sativa subsp. japonica (Rice).